Consider the following 174-residue polypeptide: Gamma-crystallin E (174 aa).

2 Beta/gamma crystallin 'Greek key' domains span residues 2–40 (GKIT…RVDS) and 41–83 (GCWM…RLIP). Positions 84-87 (HSSS) are connecting peptide. Beta/gamma crystallin 'Greek key' domains are found at residues 88-128 (HRIK…HVME) and 129-171 (GYWV…RRIM).

The protein belongs to the beta/gamma-crystallin family. In terms of tissue distribution, detected in the superior olivary complex of the auditory hindbrain.

Its function is as follows. Crystallins are the dominant structural components of the vertebrate eye lens. The chain is Gamma-crystallin E (Cryge) from Mus musculus (Mouse).